Here is a 241-residue protein sequence, read N- to C-terminus: Ribonuclease PH (241 aa).

Phosphate-binding positions include arginine 86 and 124–126 (GTR).

This sequence belongs to the RNase PH family. As to quaternary structure, homohexameric ring arranged as a trimer of dimers.

It carries out the reaction tRNA(n+1) + phosphate = tRNA(n) + a ribonucleoside 5'-diphosphate. Functionally, phosphorolytic 3'-5' exoribonuclease that plays an important role in tRNA 3'-end maturation. Removes nucleotide residues following the 3'-CCA terminus of tRNAs; can also add nucleotides to the ends of RNA molecules by using nucleoside diphosphates as substrates, but this may not be physiologically important. Probably plays a role in initiation of 16S rRNA degradation (leading to ribosome degradation) during starvation. This Hamiltonella defensa subsp. Acyrthosiphon pisum (strain 5AT) protein is Ribonuclease PH.